A 636-amino-acid polypeptide reads, in one-letter code: Threonine--tRNA ligase (636 aa).

Residues 1 to 63 enclose the TGS domain; the sequence is MNEINVTLPD…ADGARVEIIT (63 aa). The catalytic stretch occupies residues 243-534; that stretch reads DHRKLGRELD…LIEHFAGNFP (292 aa). The Zn(2+) site is built by cysteine 335, histidine 386, and histidine 511.

Belongs to the class-II aminoacyl-tRNA synthetase family. As to quaternary structure, homodimer. Requires Zn(2+) as cofactor.

Its subcellular location is the cytoplasm. The enzyme catalyses tRNA(Thr) + L-threonine + ATP = L-threonyl-tRNA(Thr) + AMP + diphosphate + H(+). Its function is as follows. Catalyzes the attachment of threonine to tRNA(Thr) in a two-step reaction: L-threonine is first activated by ATP to form Thr-AMP and then transferred to the acceptor end of tRNA(Thr). Also edits incorrectly charged L-seryl-tRNA(Thr). This chain is Threonine--tRNA ligase, found in Citrifermentans bemidjiense (strain ATCC BAA-1014 / DSM 16622 / JCM 12645 / Bem) (Geobacter bemidjiensis).